Consider the following 380-residue polypeptide: Cytochrome b (380 aa).

The next 4 membrane-spanning stretches (helical) occupy residues 34-54, 78-99, 114-134, and 179-199; these read FGSLLGICLATQILTGLLLAA, WLIRNLHANGASFFFICIYLHI, WNTGVILLLTLMATAFVGYVL, and FFTLHFLLPFMIMGLTLIHLT. The heme b site is built by H84 and H98. Residues H183 and H197 each contribute to the heme b site. H202 is a binding site for a ubiquinone. Helical transmembrane passes span 227–247, 289–309, 321–341, and 348–368; these read LKDILGFMLMLLPLMTLALFS, LGGVLALAASVLILFLAPLLH, LSQLLFWTLTANLLILTWVGS, and FMIIGQLASLTYFTILLVLFP.

It belongs to the cytochrome b family. In terms of assembly, the cytochrome bc1 complex contains 11 subunits: 3 respiratory subunits (MT-CYB, CYC1 and UQCRFS1), 2 core proteins (UQCRC1 and UQCRC2) and 6 low-molecular weight proteins (UQCRH/QCR6, UQCRB/QCR7, UQCRQ/QCR8, UQCR10/QCR9, UQCR11/QCR10 and a cleavage product of UQCRFS1). This cytochrome bc1 complex then forms a dimer. It depends on heme b as a cofactor.

The protein resides in the mitochondrion inner membrane. Component of the ubiquinol-cytochrome c reductase complex (complex III or cytochrome b-c1 complex) that is part of the mitochondrial respiratory chain. The b-c1 complex mediates electron transfer from ubiquinol to cytochrome c. Contributes to the generation of a proton gradient across the mitochondrial membrane that is then used for ATP synthesis. This Anthropoides virgo (Demoiselle crane) protein is Cytochrome b (MT-CYB).